Consider the following 521-residue polypeptide: Importin subunit alpha-3 (521 aa).

Ala-2 bears the N-acetylalanine mark. An IBB domain is found at 2–58 (ADNEKLDNQRLKNFKNKGRDLETMRRQRNEVVVELRKNKRDEHLLKRRNVPHEDICE). Positions 43–52 (EHLLKRRNVP) match the Nuclear localization signal motif. A Phosphoserine modification is found at Ser-60. One copy of the ARM 1; truncated repeat lies at 66–106 (YRVQNTSLEAIVQNASSDNQGIQLSAVQAARKLLSSDRNPP). ARM repeat units follow at residues 107-149 (IDDL…TSEQ), 150-194 (TQAV…CRDY), 195-233 (VISL…HKDP), 234-278 (PPPM…EQIQ), 279-318 (MVID…TDEQ), 319-360 (TQVV…NQQQ), 361-400 (VQAV…ISGR), and 401-443 (KDQV…KMAE). Residues 137 to 229 (WALTNIASGT…VTWVMVNLCR (93 aa)) are NLS binding site (major). An NLS binding site (minor) region spans residues 306-394 (RAVGNIVTGT…QKEAAWAISN (89 aa)). The ARM 10; atypical repeat unit spans residues 447-485 (ETIGNLIEECGGLEKIEQLQNHENEDIYKLAYEIIDQFF).

The protein belongs to the importin alpha family. As to quaternary structure, forms a complex with importin subunit beta-1 (KPNB1). Interacts with SNAI1. Interacts with TALDO1 isoform 1. Interacts with CYB1. In terms of assembly, (Microbial infection) Interacts with MERS virus protein OF4b; this interaction prevents the translocation of NF-kappa-B complex to the nucleus. (Microbial infection) Interacts with human adenovirus 5 E1A protein; this interaction allows E1A import into the host nucleus. As to quaternary structure, (Microbial infection) Interacts with Chikungunya virus capsid protein; this interaction allows the nuclear import of the viral capsid protein. As to expression, highly expressed in testis, ovary, small intestine, heart, skeletal muscle, lung and pancreas, but barely detectable in kidney, thymus, colon and peripheral blood leukocytes.

The protein localises to the cytoplasm. Its subcellular location is the nucleus. Its function is as follows. Functions in nuclear protein import as an adapter protein for nuclear receptor KPNB1. Binds specifically and directly to substrates containing either a simple or bipartite NLS motif. Docking of the importin/substrate complex to the nuclear pore complex (NPC) is mediated by KPNB1 through binding to nucleoporin FxFG repeats and the complex is subsequently translocated through the pore by an energy requiring, Ran-dependent mechanism. At the nucleoplasmic side of the NPC, Ran binds to importin-beta and the three components separate and importin-alpha and -beta are re-exported from the nucleus to the cytoplasm where GTP hydrolysis releases Ran from importin. The directionality of nuclear import is thought to be conferred by an asymmetric distribution of the GTP- and GDP-bound forms of Ran between the cytoplasm and nucleus. Mediates nuclear import of AARS1, MRTFA and RANBP3. In terms of biological role, (Microbial infection) In vitro, mediates the nuclear import of human cytomegalovirus UL84 by recognizing a non-classical NLS. In vitro, mediates the nuclear import of human cytomegalovirus UL84 by recognizing a non-classical NLS. The polypeptide is Importin subunit alpha-3 (Homo sapiens (Human)).